Reading from the N-terminus, the 291-residue chain is Gamma-soluble NSF attachment protein (291 aa).

Belongs to the SNAP family.

It is found in the membrane. Functionally, required for vesicular transport between the endoplasmic reticulum and the Golgi apparatus. Binds to SNARE complex and then recruits NSF to disassemble it. The polypeptide is Gamma-soluble NSF attachment protein (GSNAP) (Arabidopsis thaliana (Mouse-ear cress)).